Consider the following 120-residue polypeptide: Anti-adapter protein IraM (120 aa).

Belongs to the IraM/RssC family.

It localises to the cytoplasm. Involved in the stabilization of the sigma stress factor RpoS. The chain is Anti-adapter protein IraM from Salmonella choleraesuis (strain SC-B67).